A 126-amino-acid polypeptide reads, in one-letter code: uncharacterized protein (126 aa).

This is an uncharacterized protein from Saccharomyces cerevisiae (strain ATCC 204508 / S288c) (Baker's yeast).